The chain runs to 144 residues: Large ribosomal subunit protein uL16 (144 aa).

A compositionally biased stretch (basic residues) spans 1-16 (MLQPKKTKFRRQQKGR). Positions 1–22 (MLQPKKTKFRRQQKGRMKGEAQ) are disordered.

Belongs to the universal ribosomal protein uL16 family. As to quaternary structure, part of the 50S ribosomal subunit.

Its function is as follows. Binds 23S rRNA and is also seen to make contacts with the A and possibly P site tRNAs. This Parabacteroides distasonis (strain ATCC 8503 / DSM 20701 / CIP 104284 / JCM 5825 / NCTC 11152) protein is Large ribosomal subunit protein uL16.